The following is a 402-amino-acid chain: Zinc finger CCCH domain-containing protein 35 (402 aa).

2 C3H1-type zinc fingers span residues 117-144 (CYSG…HGVF) and 152-176 (RYRT…HTPD). Disordered regions lie at residues 180-211 (VLPP…AESY) and 232-258 (SSPT…DAAG). Residues 183-192 (PSQQQGSNSP) are compositionally biased toward polar residues. The segment covering 232 to 241 (SSPTSTLVSP) has biased composition (low complexity). Residues 242–253 (PRSPPSESPPLS) show a composition bias toward pro residues.

The sequence is that of Zinc finger CCCH domain-containing protein 35 from Oryza sativa subsp. japonica (Rice).